The primary structure comprises 134 residues: Large ribosomal subunit protein uL22 (134 aa).

This sequence belongs to the universal ribosomal protein uL22 family. As to quaternary structure, part of the 50S ribosomal subunit.

In terms of biological role, this protein binds specifically to 23S rRNA; its binding is stimulated by other ribosomal proteins, e.g. L4, L17, and L20. It is important during the early stages of 50S assembly. It makes multiple contacts with different domains of the 23S rRNA in the assembled 50S subunit and ribosome. Its function is as follows. The globular domain of the protein is located near the polypeptide exit tunnel on the outside of the subunit, while an extended beta-hairpin is found that lines the wall of the exit tunnel in the center of the 70S ribosome. The protein is Large ribosomal subunit protein uL22 of Rhodococcus erythropolis (strain PR4 / NBRC 100887).